The primary structure comprises 145 residues: Small ribosomal subunit protein eS19 (145 aa).

It belongs to the eukaryotic ribosomal protein eS19 family. Part of the 30S ribosomal subunit.

Functionally, may be involved in maturation of the 30S ribosomal subunit. In Methanothermobacter thermautotrophicus (strain ATCC 29096 / DSM 1053 / JCM 10044 / NBRC 100330 / Delta H) (Methanobacterium thermoautotrophicum), this protein is Small ribosomal subunit protein eS19.